Here is a 95-residue protein sequence, read N- to C-terminus: Small ribosomal subunit protein uS19 (95 aa).

Residues 73–95 (EFSPTRSYRGHGADKNAKGSKKK) form a disordered region.

This sequence belongs to the universal ribosomal protein uS19 family.

In terms of biological role, protein S19 forms a complex with S13 that binds strongly to the 16S ribosomal RNA. This chain is Small ribosomal subunit protein uS19, found in Deinococcus deserti (strain DSM 17065 / CIP 109153 / LMG 22923 / VCD115).